A 2339-amino-acid chain; its full sequence is MVRFGDELGGRYGGAGGAERARGGGAGGAGGPGPGGLPPGQRVLYKQSIAQRARTMALYNPIPVKQNCFTVNRSLFVFSEDNVVRKYAKRITEWPPFEYMILATIIANCIVLALEQHLPDGDKTPMSERLDDTEPYFIGIFCFEAGIKILALGFVLHKGSYLRNGWNVMDFVVVLTGILATAGTDFDLRTLRAVRVLRPLKLVSGIPSLQVVLKSIMKAMVPLLQIGLLLFFAILMFAIIGLEFYMGKFHKACFPNSTDPDPVGDFPCGKEAPARLCEGDTECREYWAGPNFGITNFDNILFAILTVFQCITMEGWTDILYNTNDAAGNTWNWLYFIPLIIIGSFFMLNLVLGVLSGEFAKERERVENRRAFLKLRRQQQIERELNGYLEWIFKAEEVMLAEEDRNAEEKSPLDAVLKRAAAKKSRSDLIQAEEGEGRLTGLCAPGSPFARASLKSGKTESSSYFRRKEKMFRFFIRRMVKAQSFYWTVLCVVALNTLCVAMVHYNQPQRLTTALYFAEFVFLGLFLTEMSLKMYGLGPRSYFRSSFNCFDFGVIVGSIFEVVWAAVKPGTSFGISVLRALRLLRIFKVTKYWNSLRNLVVSLLNSMKSIISLLFLLFLFIVVFALLGMQLFGGQFNFKDETPTTNFDTFPAAILTVFQILTGEDWNAVMYHGIESQGGVSRGMFSSFYFIVLTLFGNYTLLNVFLAIAVDNLANAQELTKDEEEMEEAANQKLALQKAKEVAEVSPMSAANISIAARQQNSAKARSVWEQRASQLRLQNLRASCEALYSEMDPEERLRYATARHLRPDVKTHLDRPLVVEPGRDAPRGPPGGKSRPDGSEAPEGADPPRRHHRHRDKDKAPATVPSAGEQDRAEALRAEGGELGPREERGRPRRSRSKEAPGAPEVRSDRGRGPCPEGGRRHHRRGSPEEAAEREPRRHRAHRHGPDPGKEGPASGTRGERRARHRTGPRACPREAESSEEPARRHRARHKAPPTQETAEKDKEAAEKGGEATEAEKDKEARNHQPKELPCDLEAIGMLGVGAVHTLPSTCLQKVEEQPEDADNQRNVTRMGSQPPDTSTTVHIPVTLTGPPGETTVVPSGNVDLESQAEGKKEVETSDVMRSGPRPIVPYSSMFCLSPTNLLRRCCHYIVTMRYFEMVILVVIALSSIALAAEDPVRTDSPRNNALKYMDYIFTGVFTFEMVIKMIDLGLLLHPGAYFRDLWNILDFIVVSGALVAFAFSGSKGKDISTIKSLRVLRVLRPLKTIKRLPKLKAVFDCVVNSLKNVLNILIVYMLFMFIFAVIAVQLFKGKFFYCTDESKELERDCRGQYLDYEKEEVEAQPRQWKKYDFHYDNVLWALLTLFTVSTGEGWPMVLKHSVDATYEEQGPSPGYRMELSIFYVVYFVVFPFFFVNIFVALIIITFQEQGDKVMSECSLEKNERACIDFAISARPLTRYMPQNKQSFQYKTWTFVVSPPFEYFIMAMIALNTVVLMMKFYDAPYEYELMLKCLNIVFTSMFSMECVLKIIAFGVLNYFRDAWNVFDFVTVLGSITDILVTEIANNFINLSFLRLFRAARLIKLLRQGYTIRILLWTFVQSFKALPYVCLLIAMLFFIYAIIGMQVFGNIALDDDTSINRHNNFRTFLQALMLLFRSATGEAWHEIMLSCLSSRACDEHSNASECGSDFAYFYFVSFIFLCSFLMLNLFVAVIMDNFEYLTRDSSILGPHHLDEFIRVWAEYDPAACGRISYSDMFEMLKHMSPPLGLGKKCPARVAYKRLVRMNMPISSEDMTVHFTSTLMALIRTALDIKLAPAGTKQHQCDAELRKEISCVWANLPQKTLDLLVPPHKPDEMTVGKVYAALMIFDFYKQNKTSRDQTQQAPGGLSQLGPVSLFHPLKATLEQTQPALRGARAFLRQKSSASLSNGGAVQTQESGIKESVSWGTQRTQDVLCEARAPLERGHSAEIPVGQPGTLAVDVQMQNMTLSGPDAEPQPGLESQGRAASMPRLAAETQPAPDASPMKRSISTLAPRPHTARLGSTALDRPAPSQAPHHHHHRCHRRRDRKQRSLEKGPSLSADTDGAPDSTVGPGLPTGEGPPGCRRERERRQERGRSQERRQPSSSSSEKHRFYSCDRFGGREPPQPKPSLSSHPTSPTAGQEPGPHPQGSGSVHGSPLLSTSGASTPGRGRRQLPQTPLTPRPSVTYKTANSSPVHFAGAPSGLPAFSPGRLSRGLSEHNALLQRDPLSRPLAPGSRIGSDPYLGQRLDSEAPARALPEDAPAFEETAASNSGRSSRTSYVSSLTSQPPPLRRVPNGYHCTLGLGGGGRARRGCHHPDRDRRC.

Residues 1–90 (MVRFGDELGG…DNVVRKYAKR (90 aa)) are Cytoplasmic-facing. Residues 15–34 (AGGAERARGGGAGGAGGPGP) show a composition bias toward gly residues. The segment at 15 to 37 (AGGAERARGGGAGGAGGPGPGGL) is disordered. Arg22 carries the post-translational modification Omega-N-methylarginine. An I repeat occupies 82 to 359 (NVVRKYAKRI…LVLGVLSGEF (278 aa)). A helical membrane pass occupies residues 91–114 (ITEWPPFEYMILATIIANCIVLAL). Topologically, residues 115–131 (EQHLPDGDKTPMSERLD) are extracellular. Residues 132–152 (DTEPYFIGIFCFEAGIKILAL) form a helical membrane-spanning segment. The Cytoplasmic segment spans residues 153–163 (GFVLHKGSYLR). A helical transmembrane segment spans residues 164–182 (NGWNVMDFVVVLTGILATA). The Extracellular portion of the chain corresponds to 183 to 187 (GTDFD). The chain crosses the membrane as a helical span at residues 188–211 (LRTLRAVRVLRPLKLVSGIPSLQV). At 212–221 (VLKSIMKAMV) the chain is on the cytoplasmic side. The helical transmembrane segment at 222-244 (PLLQIGLLLFFAILMFAIIGLEF) threads the bilayer. Residues 245-331 (YMGKFHKACF…NTNDAAGNTW (87 aa)) are Extracellular-facing. An N-linked (GlcNAc...) asparagine glycan is attached at Asn256. The helical transmembrane segment at 332–356 (NWLYFIPLIIIGSFFMLNLVLGVLS) threads the bilayer. The Cytoplasmic portion of the chain corresponds to 357 to 483 (GEFAKERERV…FFIRRMVKAQ (127 aa)). The binding to the beta subunit stretch occupies residues 379-396 (QQIERELNGYLEWIFKAE). Ser411 carries the phosphoserine modification. 452–459 (ASLKSGKT) lines the ATP pocket. One copy of the II repeat lies at 469–713 (EKMFRFFIRR…VFLAIAVDNL (245 aa)). The chain crosses the membrane as a helical span at residues 484-502 (SFYWTVLCVVALNTLCVAM). The Extracellular portion of the chain corresponds to 503–512 (VHYNQPQRLT). A helical transmembrane segment spans residues 513–535 (TALYFAEFVFLGLFLTEMSLKMY). Residues 536 to 545 (GLGPRSYFRS) lie on the Cytoplasmic side of the membrane. Residue Ser545 coordinates a 1,2-diacyl-sn-glycero-3-phospho-(1D-myo-inositol-4,5-bisphosphate). Residues 546–567 (SFNCFDFGVIVGSIFEVVWAAV) traverse the membrane as a helical segment. Over 568–574 (KPGTSFG) the chain is Extracellular. Residues 575–587 (ISVLRALRLLRIF) traverse the membrane as a helical segment. A 1,2-diacyl-sn-glycero-3-phospho-(1D-myo-inositol-4,5-bisphosphate) contacts are provided by Arg585 and Lys588. Residues 588-605 (KVTKYWNSLRNLVVSLLN) are Cytoplasmic-facing. The helical transmembrane segment at 606–631 (SMKSIISLLFLLFLFIVVFALLGMQL) threads the bilayer. The Extracellular portion of the chain corresponds to 632 to 683 (FGGQFNFKDETPTTNFDTFPAAILTVFQILTGEDWNAVMYHGIESQGGVSRG). A helical transmembrane segment spans residues 684–710 (MFSSFYFIVLTLFGNYTLLNVFLAIAV). At 711–1156 (DNLANAQELT…CCHYIVTMRY (446 aa)) the chain is on the cytoplasmic side. 3 positions are modified to phosphoserine: Ser746, Ser749, and Ser784. Composition is skewed to basic and acidic residues over residues 809–827 (DVKT…RDAP), 870–891 (EQDR…EERG), 927–937 (GSPEEAAEREP), 973–984 (CPREAESSEEPA), and 999–1026 (TAEK…RNHQ). Disordered stretches follow at residues 809–1026 (DVKT…RNHQ) and 1056–1084 (VEEQ…TTVH). Over residues 1066-1083 (QRNVTRMGSQPPDTSTTV) the composition is skewed to polar residues. Position 1074 is a phosphoserine (Ser1074). The III repeat unit spans residues 1142–1424 (NLLRRCCHYI…IFVALIIITF (283 aa)). The chain crosses the membrane as a helical span at residues 1157–1175 (FEMVILVVIALSSIALAAE). The Extracellular segment spans residues 1176–1183 (DPVRTDSP). Residues 1184–1208 (RNNALKYMDYIFTGVFTFEMVIKMI) form a helical membrane-spanning segment. The Cytoplasmic portion of the chain corresponds to 1209–1222 (DLGLLLHPGAYFRD). Residues 1223-1243 (LWNILDFIVVSGALVAFAFSG) traverse the membrane as a helical segment. The Extracellular portion of the chain corresponds to 1244-1249 (SKGKDI). Residues 1250 to 1270 (STIKSLRVLRVLRPLKTIKRL) form a helical membrane-spanning segment. Over 1271–1288 (PKLKAVFDCVVNSLKNVL) the chain is Cytoplasmic. A helical membrane pass occupies residues 1289–1308 (NILIVYMLFMFIFAVIAVQL). Over 1309–1395 (FKGKFFYCTD…EQGPSPGYRM (87 aa)) the chain is Extracellular. A helical membrane pass occupies residues 1396–1421 (ELSIFYVVYFVVFPFFFVNIFVALII). The Cytoplasmic portion of the chain corresponds to 1422–1476 (ITFQEQGDKVMSECSLEKNERACIDFAISARPLTRYMPQNKQSFQYKTWTFVVSP). One copy of the IV repeat lies at 1461–1714 (NKQSFQYKTW…LFVAVIMDNF (254 aa)). Residues 1477–1495 (PFEYFIMAMIALNTVVLMM) form a helical membrane-spanning segment. The Extracellular portion of the chain corresponds to 1496–1503 (KFYDAPYE). Residues 1504-1528 (YELMLKCLNIVFTSMFSMECVLKII) traverse the membrane as a helical segment. Residues 1529–1538 (AFGVLNYFRD) lie on the Cytoplasmic side of the membrane. Residues 1539-1560 (AWNVFDFVTVLGSITDILVTEI) form a helical membrane-spanning segment. The Extracellular segment spans residues 1561–1566 (ANNFIN). Asn1566 carries N-linked (GlcNAc...) asparagine glycosylation. Residues 1567 to 1585 (LSFLRLFRAARLIKLLRQG) form a helical membrane-spanning segment. Residues 1586 to 1604 (YTIRILLWTFVQSFKALPY) lie on the Cytoplasmic side of the membrane. The chain crosses the membrane as a helical span at residues 1605 to 1624 (VCLLIAMLFFIYAIIGMQVF). At 1625 to 1686 (GNIALDDDTS…SNASECGSDF (62 aa)) the chain is on the extracellular side. Residue Asn1678 is glycosylated (N-linked (GlcNAc...) asparagine). The helical transmembrane segment at 1687–1710 (AYFYFVSFIFLCSFLMLNLFVAVI) threads the bilayer. The Cytoplasmic portion of the chain corresponds to 1711-2339 (MDNFEYLTRD…CHHPDRDRRC (629 aa)). The EF-hand domain occupies 1727 to 1762 (HHLDEFIRVWAEYDPAACGRISYSDMFEMLKHMSPP). Asp1740, Arg1746, and Asp1751 together coordinate Ca(2+). Positions 1983 to 2312 (TLSGPDAEPQ…QPPPLRRVPN (330 aa)) are disordered. Basic residues predominate over residues 2050–2064 (PHHHHHRCHRRRDRK). Ser2067 bears the Phosphoserine mark. The span at 2099 to 2136 (CRRERERRQERGRSQERRQPSSSSSEKHRFYSCDRFGG) shows a compositional bias: basic and acidic residues. Polar residues-rich tracts occupy residues 2144–2155 (PSLSSHPTSPTA) and 2165–2181 (GSGS…SGAS). Ser2224, Ser2233, and Ser2256 each carry phosphoserine. Over residues 2286-2302 (SNSGRSSRTSYVSSLTS) the composition is skewed to low complexity.

It belongs to the calcium channel alpha-1 subunit (TC 1.A.1.11) family. CACNA1B subfamily. Multisubunit complex consisting of alpha-1, alpha-2, beta and delta subunits in a 1:1:1:1 ratio. The channel activity is directed by the pore-forming and voltage-sensitive alpha-1 subunit. In many cases, this subunit is sufficient to generate voltage-sensitive calcium channel activity. The auxiliary subunits beta and alpha-2/delta linked by a disulfide bridge regulate the channel activity. Interacts with RIMS1. Interacts with FMR1 (via C-terminus); this interaction induces a decrease in the number of presynaptic functional CACNA1B channels at the cell surface. Post-translationally, phosphorylated in vitro by CaM-kinase II, PKA, PKC and CGPK. In terms of tissue distribution, widespread expression throughout the brain. Highest levels in corpus striatum and midbrain.

Its subcellular location is the membrane. It carries out the reaction Ca(2+)(in) = Ca(2+)(out). Is specifically blocked by omega-conotoxin GVIA. Is specifically blocked by omega-conotoxin MVIIA (ziconotide). Is insensitive to dihydropyridines (DHP). Its function is as follows. Voltage-sensitive calcium channels (VSCC) mediate the entry of calcium ions into excitable cells and are also involved in a variety of calcium-dependent processes, including muscle contraction, hormone or neurotransmitter release, gene expression, cell motility, cell division and cell death. This alpha-1B subunit gives rise to N-type calcium currents. N-type calcium channels belong to the 'high-voltage activated' (HVA) group. They are involved in pain signaling. Calcium channels containing alpha-1B subunit may play a role in directed migration of immature neurons. Mediates Ca(2+) release probability at hippocampal neuronal soma and synaptic terminals. This chain is Voltage-dependent N-type calcium channel subunit alpha-1B (CACNA1B), found in Oryctolagus cuniculus (Rabbit).